The chain runs to 63 residues: MANVCAICGKGVASGIQVSHSHIRTKRTWKPNLQRVHAIVNGTPTRISVCTRCLRSGKVQRAV.

The protein belongs to the bacterial ribosomal protein bL28 family.

The sequence is that of Large ribosomal subunit protein bL28 from Desulfitobacterium hafniense (strain DSM 10664 / DCB-2).